Reading from the N-terminus, the 677-residue chain is High-affinity choline transport protein (677 aa).

Helical transmembrane passes span 15–35 (PVVFYTSAGLILLFSLTTILF), 54–74 (FGWYYLLAATLYIVFVVCIAC), 94–114 (LSWAAMLFAAGIGIDLMFFSV), 144–164 (FHYGLTGWSMYALMGMALGYF), 196–216 (IAAVIGTIFGIATTLGIGVVQ), 233–253 (AKAALIALSVIIATISVTSGV), 265–285 (VALALGLILFVLFMGDTSFLL), 319–339 (WTLFFWAWWVAWSPFVGLFLA), 350–370 (FVLGTLIIPFTFTLLWLSVFG), 412–432 (VATITGLLFYVTSADSGALVL), 452–472 (VFWSVAIGLLTLGMLMTNGIS), and 477–497 (TTVIMGLPFSFVIFFVMAGLY).

Belongs to the BCCT transporter (TC 2.A.15) family.

The protein localises to the cell inner membrane. It catalyses the reaction choline(in) + H(+)(in) = choline(out) + H(+)(out). It participates in amine and polyamine biosynthesis; betaine biosynthesis via choline pathway. High-affinity uptake of choline driven by a proton-motive force. The chain is High-affinity choline transport protein (betT) from Escherichia coli O157:H7.